The following is a 600-amino-acid chain: ATP-dependent ubiquitin transferase-like protein Cap2 (600 aa).

The interval 1 to 158 (MSTVVQQVPA…QEKLATTGDA (158 aa)) is E2-like domain. The active-site For E2-like domain is Cys-109. The interval 159 to 373 (VELPAFPDQS…DQLRTRGEAA (215 aa)) is linker domain. The adenylation plus E1-like domain stretch occupies residues 375–600 (DIRSKKVLII…GTVEKEPHEY (226 aa)). The active-site For E1-like domain is Cys-548.

It in the C-terminal section; belongs to the HesA/MoeB/ThiF family. Crystallizes as a Cap2 homodimer bound on each side by a CdnD monomer.

Its function is as follows. CD-NTase priming component of a CBASS antiviral system. CBASS (cyclic oligonucleotide-based antiphage signaling system) provides immunity against bacteriophages. The CD-NTase protein (CdnD) synthesizes cyclic nucleotides in response to infection; these serve as specific second messenger signals. The signals activate a diverse range of effectors, leading to bacterial cell death and thus abortive phage infection. A type II-C(AAG) CBASS system. Functionally, primes CdnD; acts as a protein transferase, conjugating CdnD, the CD-NTase, to unidentified target(s) in the cell via an E1-E2 ubiquitin transferase-like mechanism. Upon phage infection CdnD activates and makes cyclic nucleotides. During the conjugation reaction CdnD is transiently attached to AMP. Protein conjugation requires ATP. In terms of biological role, protects E.coli against phage T2 infection. When the cdnD-cap2-cap3-cap4 operon is introduced in E.coli there is a more than 10(3) decrease in the efficiency of T2 plaque formation. The operon does not protect against phage T5 and only about 10-fold against T7. In Enterobacter hormaechei subsp. hoffmannii (strain UCI 50), this protein is ATP-dependent ubiquitin transferase-like protein Cap2.